Reading from the N-terminus, the 64-residue chain is Mitotic-spindle organizing protein 1 (64 aa).

The protein belongs to the MOZART1 family. As to quaternary structure, part of the gamma-tubulin complex. Interacts directly with alp6/GPC3.

The protein localises to the cytoplasm. It localises to the cytoskeleton. It is found in the microtubule organizing center. Its subcellular location is the spindle pole body. In terms of biological role, required for gamma-tubulin complex recruitment to the microtubule organizing center (MTOC). In Schizosaccharomyces pombe (strain 972 / ATCC 24843) (Fission yeast), this protein is Mitotic-spindle organizing protein 1 (mzt1).